Here is a 325-residue protein sequence, read N- to C-terminus: Lipoyl synthase (325 aa).

[4Fe-4S] cluster is bound by residues Cys72, Cys77, Cys83, Cys98, Cys102, Cys105, and Ser312. One can recognise a Radical SAM core domain in the interval 84-301; sequence FAGGTATFMI…AEEGERMGFK (218 aa).

Belongs to the radical SAM superfamily. Lipoyl synthase family. The cofactor is [4Fe-4S] cluster.

The protein resides in the cytoplasm. The catalysed reaction is [[Fe-S] cluster scaffold protein carrying a second [4Fe-4S](2+) cluster] + N(6)-octanoyl-L-lysyl-[protein] + 2 oxidized [2Fe-2S]-[ferredoxin] + 2 S-adenosyl-L-methionine + 4 H(+) = [[Fe-S] cluster scaffold protein] + N(6)-[(R)-dihydrolipoyl]-L-lysyl-[protein] + 4 Fe(3+) + 2 hydrogen sulfide + 2 5'-deoxyadenosine + 2 L-methionine + 2 reduced [2Fe-2S]-[ferredoxin]. It participates in protein modification; protein lipoylation via endogenous pathway; protein N(6)-(lipoyl)lysine from octanoyl-[acyl-carrier-protein]: step 2/2. Its function is as follows. Catalyzes the radical-mediated insertion of two sulfur atoms into the C-6 and C-8 positions of the octanoyl moiety bound to the lipoyl domains of lipoate-dependent enzymes, thereby converting the octanoylated domains into lipoylated derivatives. In Azotobacter vinelandii (strain DJ / ATCC BAA-1303), this protein is Lipoyl synthase.